Reading from the N-terminus, the 324-residue chain is Acetyl-coenzyme A carboxylase carboxyl transferase subunit alpha (324 aa).

The CoA carboxyltransferase C-terminal domain maps to 37–291 (ILEDKLENLE…DLMLRKTFEQ (255 aa)).

This sequence belongs to the AccA family. In terms of assembly, acetyl-CoA carboxylase is a heterohexamer composed of biotin carboxyl carrier protein (AccB), biotin carboxylase (AccC) and two subunits each of ACCase subunit alpha (AccA) and ACCase subunit beta (AccD).

It localises to the cytoplasm. It catalyses the reaction N(6)-carboxybiotinyl-L-lysyl-[protein] + acetyl-CoA = N(6)-biotinyl-L-lysyl-[protein] + malonyl-CoA. It functions in the pathway lipid metabolism; malonyl-CoA biosynthesis; malonyl-CoA from acetyl-CoA: step 1/1. Its function is as follows. Component of the acetyl coenzyme A carboxylase (ACC) complex. First, biotin carboxylase catalyzes the carboxylation of biotin on its carrier protein (BCCP) and then the CO(2) group is transferred by the carboxyltransferase to acetyl-CoA to form malonyl-CoA. This Bacillus cereus (strain Q1) protein is Acetyl-coenzyme A carboxylase carboxyl transferase subunit alpha.